Here is a 207-residue protein sequence, read N- to C-terminus: Small ribosomal subunit protein uS4 (207 aa).

A disordered region spans residues 31-55 (KCKLDSKPGQHGRTSGARTSDYGTQ). The span at 42–53 (GRTSGARTSDYG) shows a compositional bias: polar residues. Residues 97 to 160 (SRLDNVVYRM…KKQARIVEAL (64 aa)) enclose the S4 RNA-binding domain.

This sequence belongs to the universal ribosomal protein uS4 family. As to quaternary structure, part of the 30S ribosomal subunit. Contacts protein S5. The interaction surface between S4 and S5 is involved in control of translational fidelity.

One of the primary rRNA binding proteins, it binds directly to 16S rRNA where it nucleates assembly of the body of the 30S subunit. Functionally, with S5 and S12 plays an important role in translational accuracy. In Burkholderia ambifaria (strain ATCC BAA-244 / DSM 16087 / CCUG 44356 / LMG 19182 / AMMD) (Burkholderia cepacia (strain AMMD)), this protein is Small ribosomal subunit protein uS4.